The following is a 693-amino-acid chain: Protein-glutamine gamma-glutamyltransferase E (693 aa).

Position 111 is a phosphotyrosine (Y111). T112 is modified (phosphothreonine). The Ca(2+) site is built by A222, N225, N227, and D228. The active site involves C273. Ca(2+) is bound by residues D302, D304, N306, S308, and D325. Active-site residues include H331 and D354. Residues N394, T416, E444, and E449 each contribute to the Ca(2+) site. Residues K455–S482 form a disordered region.

This sequence belongs to the transglutaminase superfamily. Transglutaminase family. As to quaternary structure, consists of two polypeptide chains, which are synthesized as a precursor form of a single polypeptide. Ca(2+) is required as a cofactor. In terms of processing, activated by proteolytic processing. In vitro activation is commonly achieved by cleavage with dispase, a neutral bacterial protease. Physiological activation may be catalyzed by CTSL and, to a lesser extent, by CTSS.

Its subcellular location is the cytoplasm. The enzyme catalyses L-glutaminyl-[protein] + L-lysyl-[protein] = [protein]-L-lysyl-N(6)-5-L-glutamyl-[protein] + NH4(+). In terms of biological role, catalyzes the calcium-dependent formation of isopeptide cross-links between glutamine and lysine residues in various proteins, as well as the conjugation of polyamines to proteins. Involved in the formation of the cornified envelope (CE), a specialized component consisting of covalent cross-links of proteins beneath the plasma membrane of terminally differentiated keratinocytes. Catalyzes small proline-rich proteins and LOR cross-linking to form small interchain oligomers, which are further cross-linked by TGM1 onto the growing CE scaffold. In hair follicles, involved in cross-linking structural proteins to hardening the inner root sheath. The protein is Protein-glutamine gamma-glutamyltransferase E (Tgm3) of Rattus norvegicus (Rat).